Here is a 682-residue protein sequence, read N- to C-terminus: DNA-directed RNA polymerase subunit beta' (682 aa).

Residues cysteine 69, cysteine 71, cysteine 87, and cysteine 90 each contribute to the Zn(2+) site. Residues aspartate 489, aspartate 491, and aspartate 493 each contribute to the Mg(2+) site.

The protein belongs to the RNA polymerase beta' chain family. RpoC1 subfamily. In terms of assembly, in plastids the minimal PEP RNA polymerase catalytic core is composed of four subunits: alpha, beta, beta', and beta''. When a (nuclear-encoded) sigma factor is associated with the core the holoenzyme is formed, which can initiate transcription. Requires Mg(2+) as cofactor. Zn(2+) serves as cofactor.

It is found in the plastid. The protein localises to the chloroplast. The enzyme catalyses RNA(n) + a ribonucleoside 5'-triphosphate = RNA(n+1) + diphosphate. In terms of biological role, DNA-dependent RNA polymerase catalyzes the transcription of DNA into RNA using the four ribonucleoside triphosphates as substrates. In Agrostis stolonifera (Creeping bentgrass), this protein is DNA-directed RNA polymerase subunit beta'.